The chain runs to 780 residues: E3 SUMO-protein ligase gei-17 (780 aa).

Residues 181-210 form a disordered region; that stretch reads APLHSSFPNHGRSSQQSLQKSEKSNRPKKM. The region spanning 203 to 367 is the PINIT domain; that stretch reads KSNRPKKMYA…AAGVYFVHRV (165 aa). Residues 400 to 485 form an SP-RING-type zinc finger; that stretch reads GEDDIAMDRL…LAKVDKNTTE (86 aa). Positions 431, 433, 454, and 457 each coordinate Zn(2+). Residues 519–530 are compositionally biased toward polar residues; sequence GTASCSSTNGNG. Disordered stretches follow at residues 519–544, 560–594, and 732–755; these read GTASCSSTNGNGLANEAAKKKPADDD, IMNSLNDSFSPGRHTASAELAAQKTPPQQKKKTKD, and QQHHLQQQQQQQQSPQIMSPSFYA. The span at 732 to 749 shows a compositional bias: low complexity; it reads QQHHLQQQQQQQQSPQIM.

It belongs to the PIAS family. May interact with gex-3.

Its pathway is protein modification; protein sumoylation. Its function is as follows. Functions as an E3-type smo-1 ligase. Mediates smo-1 conjugation to air-2 in vitro and is required for proper chromosome alignment. In the early embryo, specifically suppresses checkpoint activation in response to DNA damage, maybe by promoting mus-101 sumoylation. In embryos, plays a role in determining telomere localization in the nucleus. Acts with pie-1 to promote piRNA-mediated silencing and fertility in the adult germline. The protein is E3 SUMO-protein ligase gei-17 of Caenorhabditis elegans.